Reading from the N-terminus, the 367-residue chain is MKSLVLLLCLAQLWGCHSAPRGLGLIYRQPNCDDPETEEAALVAIDYINQNHPWGYKHTLNQIDEVKVWPRQPSGELFEIEIDTLETTCHVLDPTPVARCSVRQLKEHAVEGDCDFQLLKLDGKFSVVYAKCDSSPDSAEDVRKVCQDCPLLAPLNDTRVVHAAKAALAAFNAQNNGSNFQLEEISRAQLVPLPPSTYVEFTVSGTDCVAKEATEAAKCNLLAEKQYGFCKATLSEKLGGAEVAVTCTVFQTQPVTSQPQPEGANETVPTPVVDPDAPPSPPLGAPGLPPAGSPPDSHVLLAAPPGHQLHWAHYDLRHTFMGVVSLGSPSGEASHPRKTRTVVQPSVGAAAGPVVPPCPGRIRHFKV.

Residues 1–18 (MKSLVLLLCLAQLWGCHS) form the signal peptide. Residues 27-133 (YRQPNCDDPE…KFSVVYAKCD (107 aa)) enclose the Cystatin fetuin-A-type 1 domain. 6 cysteine pairs are disulfide-bonded: cysteine 32–cysteine 358, cysteine 89–cysteine 100, cysteine 114–cysteine 132, cysteine 146–cysteine 149, cysteine 208–cysteine 219, and cysteine 230–cysteine 247. A phosphoserine mark is found at serine 134, serine 135, and serine 138. The Cystatin fetuin-A-type 2 domain occupies 144-255 (KVCQDCPLLA…TCTVFQTQPV (112 aa)). N-linked (GlcNAc...) asparagine glycosylation is found at asparagine 156 and asparagine 176. Positions 254–301 (PVTSQPQPEGANETVPTPVVDPDAPPSPPLGAPGLPPAGSPPDSHVLL) are disordered. Asparagine 265 carries an N-linked (GlcNAc...) asparagine glycan. The segment covering 276–293 (DAPPSPPLGAPGLPPAGS) has biased composition (pro residues). A propeptide spans 301-340 (LAAPPGHQLHWAHYDLRHTFMGVVSLGSPSGEASHPRKTR) (connecting peptide). Threonine 319 carries the phosphothreonine modification. Serine 325, serine 328, and serine 330 each carry phosphoserine. O-linked (GalNAc...) threonine glycosylation is present at threonine 339.

The protein belongs to the fetuin family. Alpha-2-HS glycoprotein derives from this precursor, when the connecting peptide is cleaved off. The two chains A and B are held together by a single disulfide bond. In terms of processing, phosphorylated by FAM20C in the extracellular medium.

The protein localises to the secreted. Its function is as follows. Promotes endocytosis, possesses opsonic properties and influences the mineral phase of bone. Shows affinity for calcium and barium ions. This chain is Alpha-2-HS-glycoprotein (AHSG), found in Pan troglodytes (Chimpanzee).